Reading from the N-terminus, the 592-residue chain is Proline--tRNA ligase (592 aa).

Belongs to the class-II aminoacyl-tRNA synthetase family. ProS type 1 subfamily. As to quaternary structure, homodimer.

Its subcellular location is the cytoplasm. It catalyses the reaction tRNA(Pro) + L-proline + ATP = L-prolyl-tRNA(Pro) + AMP + diphosphate. In terms of biological role, catalyzes the attachment of proline to tRNA(Pro) in a two-step reaction: proline is first activated by ATP to form Pro-AMP and then transferred to the acceptor end of tRNA(Pro). As ProRS can inadvertently accommodate and process non-cognate amino acids such as alanine and cysteine, to avoid such errors it has two additional distinct editing activities against alanine. One activity is designated as 'pretransfer' editing and involves the tRNA(Pro)-independent hydrolysis of activated Ala-AMP. The other activity is designated 'posttransfer' editing and involves deacylation of mischarged Ala-tRNA(Pro). The misacylated Cys-tRNA(Pro) is not edited by ProRS. This chain is Proline--tRNA ligase, found in Corynebacterium urealyticum (strain ATCC 43042 / DSM 7109).